The sequence spans 92 residues: Small ribosomal subunit protein uS19 (92 aa).

This sequence belongs to the universal ribosomal protein uS19 family.

In terms of biological role, protein S19 forms a complex with S13 that binds strongly to the 16S ribosomal RNA. This is Small ribosomal subunit protein uS19 from Borrelia recurrentis (strain A1).